A 388-amino-acid polypeptide reads, in one-letter code: UDP-N-acetylglucosamine--N-acetylmuramyl-(pentapeptide) pyrophosphoryl-undecaprenol N-acetylglucosamine transferase (388 aa).

UDP-N-acetyl-alpha-D-glucosamine is bound by residues 42–44 (TGG), Asn159, Arg195, Ser223, Ile277, and Gln322.

It belongs to the glycosyltransferase 28 family. MurG subfamily.

The protein resides in the cell inner membrane. It carries out the reaction di-trans,octa-cis-undecaprenyl diphospho-N-acetyl-alpha-D-muramoyl-L-alanyl-D-glutamyl-meso-2,6-diaminopimeloyl-D-alanyl-D-alanine + UDP-N-acetyl-alpha-D-glucosamine = di-trans,octa-cis-undecaprenyl diphospho-[N-acetyl-alpha-D-glucosaminyl-(1-&gt;4)]-N-acetyl-alpha-D-muramoyl-L-alanyl-D-glutamyl-meso-2,6-diaminopimeloyl-D-alanyl-D-alanine + UDP + H(+). Its pathway is cell wall biogenesis; peptidoglycan biosynthesis. Functionally, cell wall formation. Catalyzes the transfer of a GlcNAc subunit on undecaprenyl-pyrophosphoryl-MurNAc-pentapeptide (lipid intermediate I) to form undecaprenyl-pyrophosphoryl-MurNAc-(pentapeptide)GlcNAc (lipid intermediate II). The protein is UDP-N-acetylglucosamine--N-acetylmuramyl-(pentapeptide) pyrophosphoryl-undecaprenol N-acetylglucosamine transferase of Albidiferax ferrireducens (strain ATCC BAA-621 / DSM 15236 / T118) (Rhodoferax ferrireducens).